Reading from the N-terminus, the 845-residue chain is Krueppel homolog 1 (845 aa).

A disordered region spans residues 141–164 (QKQQQQQQHESITNAAPTAAPSAQ). 8 consecutive C2H2-type zinc fingers follow at residues 194 to 216 (FKCD…TKSH), 271 to 293 (YQCN…YRTH), 299 to 321 (FECE…RRIH), 327 to 349 (YKCD…MRIH), 355 to 377 (HKCS…MRTH), 383 to 407 (YKCP…SRTH), 413 to 435 (YHCD…RVQH), and 441 to 463 (YKCT…IKGH). Disordered stretches follow at residues 469-610 (DDEA…VQGQ) and 757-845 (GLRS…AKAS). 3 stretches are compositionally biased toward low complexity: residues 474 to 491 (AAAA…SAGS), 498 to 508 (SSNSESSNHSP), and 532 to 559 (ATLS…SSMA). A compositionally biased stretch (polar residues) spans 582–591 (SGVSSAQPAH). The span at 759–775 (RSSTESPERSSSPESDS) shows a compositional bias: low complexity. Over residues 796-809 (NKGDDGQVDSEKAS) the composition is skewed to basic and acidic residues. The segment covering 810–823 (GDGTSAAGGAASVG) has biased composition (low complexity).

This sequence belongs to the krueppel C2H2-type zinc-finger protein family.

Plays a general role in the hierarchies of gene expression leading to metamorphosis. The polypeptide is Krueppel homolog 1 (Kr-h1) (Drosophila melanogaster (Fruit fly)).